Consider the following 298-residue polypeptide: Enoyl-CoA hydratase AFT6-1 (298 aa).

The disordered stretch occupies residues Met1–Asn39.

The protein belongs to the enoyl-CoA hydratase/isomerase family.

It catalyses the reaction a (3S)-3-hydroxyacyl-CoA = a (2E)-enoyl-CoA + H2O. The enzyme catalyses a 4-saturated-(3S)-3-hydroxyacyl-CoA = a (3E)-enoyl-CoA + H2O. It functions in the pathway mycotoxin biosynthesis. Enoyl-CoA hydratase; part of the gene clusters that mediate the biosynthesis of the host-selective toxins (HSTs) AF-toxins responsible for Alternaria black spot of strawberry disease by the strawberry pathotype. AF-toxin I and III are valine derivatives of 2,3-dyhydroxy-isovaleric acid and 2-hydroxy-isovaleric acid respectively, while AF II is an isoleucine derivative of 2-hydroxy-valeric acid. These derivatives are bound to a 9,10-epoxy-8-hydroxy-9-methyl-decatrienoic acid (EDA) moiety. On cellular level, AF-toxin affects plasma membrane of susceptible cells and cause a sudden increase in loss of K(+) after a few minutes of toxin treatment. The aldo-keto reductase AFTS1 catalyzes the conversion of 2-keto-isovaleric acid (2-KIV) to 2-hydroxy-isovaleric acid (2-HIV) by reduction of its ketone to an alcohol. The acyl-CoA ligase AFT1, the hydrolase AFT2 and the enoyl-CoA hydratases AFT3 and AFT6, but also the polyketide synthase AFT9, the acyl-CoA dehydrogenase AFT10, the cytochrome P450 monooxygenase AFT11 and the oxidoreductase AFT12 are all involved in the biosynthesis of the AK-, AF- and ACT-toxin common EDA structural moiety. The exact function of each enzyme, and of additional enzymes identified within the AF-toxin clusters have still to be determined. This is Enoyl-CoA hydratase AFT6-1 from Alternaria alternata (Alternaria rot fungus).